A 393-amino-acid polypeptide reads, in one-letter code: Acetyl-CoA acetyltransferase (393 aa).

The Acyl-thioester intermediate role is filled by cysteine 88. Catalysis depends on proton acceptor residues histidine 349 and cysteine 379.

The protein belongs to the thiolase-like superfamily. Thiolase family. As to quaternary structure, homotetramer.

It is found in the cytoplasm. It carries out the reaction 2 acetyl-CoA = acetoacetyl-CoA + CoA. The protein operates within biopolymer metabolism; poly-(R)-3-hydroxybutanoate biosynthesis. Its activity is regulated as follows. The condensation reaction is inhibited by free CoA. The cleavage reaction is characterized by substrate inhibition by acetoacetyl-CoA, which is partially relieved by free CoA. Functionally, catalyzes the condensation of two acetyl-coA units to form acetoacetyl-CoA. Is involved in the biosynthesis of polyhydroxybutyrate (PHB), which is accumulated as an intracellular energy reserve material when cells grow under conditions of nutrient limitation. Also catalyzes the reverse reaction, i.e. the cleavage of acetoacetyl-CoA, and is therefore also involved in the reutilization of PHB. This is Acetyl-CoA acetyltransferase from Cupriavidus necator (strain ATCC 17699 / DSM 428 / KCTC 22496 / NCIMB 10442 / H16 / Stanier 337) (Ralstonia eutropha).